The sequence spans 220 residues: Transcriptional regulatory protein LnrK (220 aa).

The Response regulatory domain occupies 3–119 (KIIITDDQDI…TIVKAVMTVH (117 aa)). At aspartate 54 the chain carries 4-aspartylphosphate. The HTH luxR-type domain occupies 151 to 216 (KPNELLDLTE…QAAIYSVRYG (66 aa)). A DNA-binding region (H-T-H motif) is located at residues 175-194 (NKEIAEKLYITEGTVKNHVS).

In terms of processing, phosphorylated by LnrJ.

The protein resides in the cytoplasm. Functionally, required for resistance to linearmycins, a family of antibiotic-specialized metabolites produced by some streptomycetes. Member of the two-component regulatory system LnrJ/LnrK, which induces expression of the LnrLMN ABC transporter in response to linearmycins and other polyenes. Probably binds to the promoter region of the lnrLMN operon and directly regulates its expression. May also promote biofilm formation. The chain is Transcriptional regulatory protein LnrK from Bacillus subtilis (strain 168).